The primary structure comprises 416 residues: UDP-N-acetylmuramoylalanine--D-glutamate ligase (416 aa).

104 to 110 (GSNGKST) is a binding site for ATP.

It belongs to the MurCDEF family.

It is found in the cytoplasm. It carries out the reaction UDP-N-acetyl-alpha-D-muramoyl-L-alanine + D-glutamate + ATP = UDP-N-acetyl-alpha-D-muramoyl-L-alanyl-D-glutamate + ADP + phosphate + H(+). It participates in cell wall biogenesis; peptidoglycan biosynthesis. Its function is as follows. Cell wall formation. Catalyzes the addition of glutamate to the nucleotide precursor UDP-N-acetylmuramoyl-L-alanine (UMA). The sequence is that of UDP-N-acetylmuramoylalanine--D-glutamate ligase from Francisella tularensis subsp. holarctica (strain FTNF002-00 / FTA).